We begin with the raw amino-acid sequence, 474 residues long: Aspartic-type endopeptidase ctsD (474 aa).

A signal peptide spans 1–19; the sequence is MHLLQCLLSTISLASTVTA. The Peptidase A1 domain maps to 106–413; it reads YFATVRVGSQ…DYDNHRIGFA (308 aa). D124 is an active-site residue. 4 N-linked (GlcNAc...) asparagine glycosylation sites follow: N189, N197, N275, and N301. Residue D307 is part of the active site. N-linked (GlcNAc...) asparagine glycans are attached at residues N338, N344, and N414. Residue S452 is the site of GPI-anchor amidated serine attachment. A propeptide spans 453–474 (removed in mature form); it reads ASIVSRFVHWPFIFALLCMVLV.

Belongs to the peptidase A1 family.

It localises to the cell membrane. In terms of biological role, secreted aspartic-type endopeptidase which is secreted and contributes to virulence. The polypeptide is Aspartic-type endopeptidase ctsD (ctsD) (Aspergillus fumigatus (strain ATCC MYA-4609 / CBS 101355 / FGSC A1100 / Af293) (Neosartorya fumigata)).